The primary structure comprises 273 residues: 2,3,4,5-tetrahydropyridine-2,6-dicarboxylate N-succinyltransferase (273 aa).

Substrate-binding residues include R104 and D141.

Belongs to the transferase hexapeptide repeat family. In terms of assembly, homotrimer.

The protein localises to the cytoplasm. It catalyses the reaction (S)-2,3,4,5-tetrahydrodipicolinate + succinyl-CoA + H2O = (S)-2-succinylamino-6-oxoheptanedioate + CoA. It functions in the pathway amino-acid biosynthesis; L-lysine biosynthesis via DAP pathway; LL-2,6-diaminopimelate from (S)-tetrahydrodipicolinate (succinylase route): step 1/3. In Nitrosococcus oceani (strain ATCC 19707 / BCRC 17464 / JCM 30415 / NCIMB 11848 / C-107), this protein is 2,3,4,5-tetrahydropyridine-2,6-dicarboxylate N-succinyltransferase.